Reading from the N-terminus, the 226-residue chain is Protein AhpA (226 aa).

The next 2 membrane-spanning stretches (helical) occupy residues 12–32 (SMIS…LFGV) and 169–189 (GELI…HYFL).

This sequence belongs to the Smp family.

It is found in the cell inner membrane. When anaerobically expressed in wild-type E.coli K12 confers a hemolytic phenotype, but not in an sheA mutant. Suggests it affects the expression of the latent E.coli K12 hemolysin sheA under anaerobic conditions. This chain is Protein AhpA (ahpA), found in Pasteurella multocida (strain Pm70).